The primary structure comprises 249 residues: Acidic leucine-rich nuclear phosphoprotein 32 family member A (249 aa).

Phosphothreonine is present on T15. Phosphoserine is present on S17. LRR repeat units follow at residues D18–T38, E43–N64, K65–C87, and N89–K110. In terms of domain architecture, LRRCT spans C123–E161. A compositionally biased stretch (basic and acidic residues) spans G147–P156. The interval G147 to D249 is disordered. The necessary for tumor-suppressive function stretch occupies residues R150–E174. Residues D157 to E230 are compositionally biased toward acidic residues. S158 and S204 each carry phosphoserine. The segment at E165–D249 is interaction with E4F1.

It belongs to the ANP32 family. Component of the SET complex, composed of at least ANP32A, APEX1, HMGB2, NME1, SET and TREX1. Directly interacts with SET. Interacts with ATXN1/SCA1. Interacts with MAP1B. Interacts with ELAVL1. Part of the INHAT (inhibitor of histone acetyltransferases) complex. Interacts with E4F1. The N-terminus is blocked. In terms of processing, phosphorylated on serine residues, at least in part by casein kinase 2/CK2. Post-translationally, some glutamate residues are glycylated by TTLL8. This modification occurs exclusively on glutamate residues and results in a glycine chain on the gamma-carboxyl group. As to expression, widely distributed in the central nervous system, with an abundant expression in the cerebellum.

It localises to the nucleus. It is found in the cytoplasm. The protein localises to the endoplasmic reticulum. Multifunctional protein that is involved in the regulation of many processes including tumor suppression, apoptosis, cell cycle progression or transcription. Promotes apoptosis by favouring the activation of caspase-9/CASP9 and allowing apoptosome formation. In addition, plays a role in the modulation of histone acetylation and transcription as part of the INHAT (inhibitor of histone acetyltransferases) complex. Inhibits the histone-acetyltranferase activity of EP300/CREBBP (CREB-binding protein) and EP300/CREBBP-associated factor by histone masking. Preferentially binds to unmodified histone H3 and sterically inhibiting its acetylation and phosphorylation leading to cell growth inhibition. Participates in other biochemical processes such as regulation of mRNA nuclear-to-cytoplasmic translocation and stability by its association with ELAVL1 (Hu-antigen R). Plays a role in E4F1-mediated transcriptional repression as well as inhibition of protein phosphatase 2A. The chain is Acidic leucine-rich nuclear phosphoprotein 32 family member A (ANP32A) from Bos taurus (Bovine).